The chain runs to 715 residues: Polyribonucleotide nucleotidyltransferase (715 aa).

Mg(2+)-binding residues include Asp493 and Asp499. The KH domain maps to 560 to 619 (PRMITVKINPEKIRDVIGKGGSVIRALTEETGTTIDISDDGVVTIASTSSEGMAEAKKRI). The 69-residue stretch at 629–697 (GQVYEGTVLK…EKGRVRLSAK (69 aa)) folds into the S1 motif domain.

It belongs to the polyribonucleotide nucleotidyltransferase family. The cofactor is Mg(2+).

The protein localises to the cytoplasm. It carries out the reaction RNA(n+1) + phosphate = RNA(n) + a ribonucleoside 5'-diphosphate. Involved in mRNA degradation. Catalyzes the phosphorolysis of single-stranded polyribonucleotides processively in the 3'- to 5'-direction. The sequence is that of Polyribonucleotide nucleotidyltransferase from Burkholderia cenocepacia (strain HI2424).